Consider the following 553-residue polypeptide: Methionine--tRNA ligase (553 aa).

The short motif at 12–22 is the 'HIGH' region element; that stretch reads PYANSQLHLGH. 4 residues coordinate Zn(2+): C144, C147, C157, and C160. The 'KMSKS' region signature appears at 332–336; sequence KFSKS. An ATP-binding site is contributed by K335.

The protein belongs to the class-I aminoacyl-tRNA synthetase family. MetG type 1 subfamily. As to quaternary structure, monomer. Requires Zn(2+) as cofactor.

The protein localises to the cytoplasm. The catalysed reaction is tRNA(Met) + L-methionine + ATP = L-methionyl-tRNA(Met) + AMP + diphosphate. In terms of biological role, is required not only for elongation of protein synthesis but also for the initiation of all mRNA translation through initiator tRNA(fMet) aminoacylation. The sequence is that of Methionine--tRNA ligase from Dehalococcoides mccartyi (strain CBDB1).